Reading from the N-terminus, the 132-residue chain is Protein FasE (132 aa).

The chain is Protein FasE (fasE) from Escherichia coli.